Reading from the N-terminus, the 233-residue chain is MSARENILAKLKKADALPMEEPAVFDYYREMGVSWGSEVERLKHWAAAMRAVKTEIYWVTKSNWMQVFREAAEGKGLKNILLPLATEHGQIARAALADSNIEPIAFEREIDTWKTEFFTNIDAGFSGAQCGIARTGTLMLFSSPEEPRTLSLVPPVHFCLFDTSKMYNEFHNAVEGEKLVENGMPTNVFLISGPSKTADIQLTLAYGAHGPRDLVILAILPDHISPADLEENA.

Belongs to the LutC/YkgG family.

This is an uncharacterized protein from Neisseria meningitidis serogroup B (strain ATCC BAA-335 / MC58).